A 511-amino-acid chain; its full sequence is Activin receptor type-2B (511 aa).

The signal sequence occupies residues 1 to 20 (MGASVALTFLLLLATFRAGS). Residues 21–136 (GHDEVETREC…KPQPSASVLN (116 aa)) are Extracellular-facing. An intrachain disulfide couples C30 to C61. N43 and N67 each carry an N-linked (GlcNAc...) asparagine glycan. Intrachain disulfides connect C86/C105, C92/C104, and C106/C111. Residues 137-157 (ILIYSLLPIVGLSMAILLAFW) form a helical membrane-spanning segment. The Cytoplasmic portion of the chain corresponds to 158 to 511 (MYRHRKPSYG…VDLPPKESSI (354 aa)). Positions 189–477 (LQLLDIKARG…LSAGCVEERI (289 aa)) constitute a Protein kinase domain. ATP-binding positions include 195-203 (KARGRFGCV) and K216. The active-site Proton acceptor is D320.

This sequence belongs to the protein kinase superfamily. TKL Ser/Thr protein kinase family. TGFB receptor subfamily.

It is found in the membrane. The catalysed reaction is L-threonyl-[receptor-protein] + ATP = O-phospho-L-threonyl-[receptor-protein] + ADP + H(+). The enzyme catalyses L-seryl-[receptor-protein] + ATP = O-phospho-L-seryl-[receptor-protein] + ADP + H(+). Its function is as follows. Receptor for activin A, activin B and inhibin A. Involved in transmembrane signaling. The sequence is that of Activin receptor type-2B (acvr2b) from Xenopus laevis (African clawed frog).